We begin with the raw amino-acid sequence, 122 residues long: Large ribosomal subunit protein uL14c (122 aa).

The protein belongs to the universal ribosomal protein uL14 family. As to quaternary structure, part of the 50S ribosomal subunit.

It localises to the plastid. Its subcellular location is the chloroplast. Binds to 23S rRNA. The chain is Large ribosomal subunit protein uL14c from Nicotiana tomentosiformis (Tobacco).